Reading from the N-terminus, the 2365-residue chain is TRIO and F-actin-binding protein (2365 aa).

4 disordered regions span residues 48–1106 (VPYC…HEPL), 1168–1554 (HRDA…SERR), 1593–1667 (LPRK…WPKI), and 1679–1751 (AGLE…TSWR). Residues 132–151 (SDPTSSPDSATPDDTSNSSS) are compositionally biased toward low complexity. H221 is subject to Phosphothreonine. Polar residues-rich tracts occupy residues 239–271 (TLTQ…QAAS), 291–375 (RASS…TPQR), 403–422 (RTSC…SPNR), 429–471 (RTSC…SPNR), 478–520 (RTSC…SPNR), 527–569 (RTSC…SPNR), 576–618 (RTSC…SPNR), 625–650 (RTSC…SPRT), 661–674 (SSPN…NPRT), 683–701 (RASS…TSCA), 709–722 (SSPN…NPRT), 745–785 (RTSC…SPNR), and 807–837 (IRAT…PKTS). Residues 324–348 (STQEDTPRASSTQWNTPRASSPSRS) form an essentiel for its aggregation region. Q457 is subject to Phosphothreonine. Over residues 839 to 854 (TKRDNLRPTCTQRDRT) the composition is skewed to basic and acidic residues. 3 stretches are compositionally biased toward polar residues: residues 855 to 898 (QSFS…SSPH), 913 to 927 (PTQS…PSRS), and 945 to 994 (DRPQ…TSSP). Residues 1045-1056 (RAPESEPPHHEP) are compositionally biased toward basic and acidic residues. Positions 1195 to 1206 (SMESLAPSTDSL) are enriched in polar residues. 2 stretches are compositionally biased toward basic and acidic residues: residues 1260–1270 (ETRHNLEREEY) and 1303–1319 (GRAE…RKSE). Positions 1332–1349 (SQQPSQGQSQLLRRQSSP) are enriched in low complexity. 2 stretches are compositionally biased toward basic and acidic residues: residues 1378-1387 (SPEKRPEGDR) and 1402-1411 (TPERELRTQR). Residues 1452-1461 (GGLGPGGWWG) are compositionally biased toward gly residues. A compositionally biased stretch (basic and acidic residues) spans 1494–1508 (WEEKPTHELPRELGK). Polar residues predominate over residues 1524 to 1534 (ESSQSWHSGTP). A compositionally biased stretch (basic and acidic residues) spans 1594–1606 (PRKDPAGHRDDLA). Residues 1645 to 1664 (ALQSQSPVQLPSPACTSTQW) show a composition bias toward polar residues. Residues 1696 to 1705 (PSLPELQFQP) show a composition bias toward low complexity. Over residues 1724 to 1735 (KQADSADKRPAE) the composition is skewed to basic and acidic residues. The PH domain occupies 1778–1887 (LNFKKGWMSI…WIEALRKTVR (110 aa)). S1796 is subject to Phosphoserine. Disordered regions lie at residues 1889-2017 (TSAP…LTED) and 2174-2194 (LSKT…HQSD). The residue at position 1930 (R1930) is an Omega-N-methylarginine. A phosphoserine mark is found at S1949 and S1955. Residues 1965–1997 (TPDRLAKQEELERDLAQRSEERRKWFEATDSRT) are compositionally biased toward basic and acidic residues. 2 coiled-coil regions span residues 2062–2247 (SDGH…NQEL) and 2281–2361 (ELEV…SMRN).

In terms of assembly, isoform 1 forms aggregates. Isoform 1 binds to TRIO and F-actin. Isoform 1 may also interact with myosin II. Interacts with HECTD3. Interacts with PJVK. Interacts with TERF1; mediates TERF1 localization to the centrosome. In terms of processing, ubiquitinated by HECTD3, leading to its degradation by the proteasome. Phosphorylation at Thr-457 by PLK1 ensures mitotic progression and is essential for accurate chromosome segregation. Phosphorylation at residues Thr-221 and Thr-457 by kinase NEK2A and PLK1 coordinates TERF1 translocation from telomere to spindle pole. In terms of tissue distribution, widely expressed. Highly expressed in heart and placenta. Expressed in fetal brain, retina and cochlea but is not detectable in the other tissues.

It localises to the nucleus. The protein localises to the cytoplasm. It is found in the cytoskeleton. Its subcellular location is the microtubule organizing center. The protein resides in the centrosome. It localises to the midbody. The protein localises to the chromosome. It is found in the telomere. Regulates actin cytoskeletal organization, cell spreading and cell contraction by directly binding and stabilizing filamentous F-actin and prevents its depolymerization. May also serve as a linker protein to recruit proteins required for F-actin formation and turnover. Essential for correct mitotic progression. Its function is as follows. Plays a pivotal role in the formation of stereocilia rootlets. The polypeptide is TRIO and F-actin-binding protein (TRIOBP) (Homo sapiens (Human)).